The sequence spans 78 residues: Large ribosomal subunit protein bL28 (78 aa).

This sequence belongs to the bacterial ribosomal protein bL28 family.

This is Large ribosomal subunit protein bL28 from Shigella boydii serotype 4 (strain Sb227).